Here is a 1325-residue protein sequence, read N- to C-terminus: Nonribosomal peptide synthetase (1325 aa).

An adenylation region spans residues 248 to 644 (YQQLDRLSTR…LGEIEYQIQQ (397 aa)). The Carrier domain occupies 779–856 (EIVNPGEITL…DQARLLRPLS (78 aa)). Ser816 bears the O-(pantetheine 4'-phosphoryl)serine mark. Residues 893–1310 (EDVYPCTPLQ…DDYSTTLHTL (418 aa)) form a condensation region.

This sequence belongs to the NRP synthetase family. Pantetheine 4'-phosphate serves as cofactor.

The protein operates within antifungal biosynthesis. Functionally, nonribosomal peptide synthetase; part of the gene cluster that mediates the biosynthesis of the tetrahydropyranyl antifungal agent lanomycin that acts as an inhibitor of CYP51 and blocks the ergosterol biosynthesis. The biosynthesis probably begins with the formation of an hexaketide, followed by methionine mediated alkylation of C-2 and C-6, and methylation of the reduced C-3 oxygen, pyran forming reductive ring closure, oxygenation of C-4, beta-keto reduction, enoyl reduction and dehydration of the remaining oxygens, and finally, acylation with glycine to complete the biosynthesis. The polypeptide is Nonribosomal peptide synthetase (Pyrenophora dematioidea (Helminthosporium dematioideum)).